The chain runs to 109 residues: Glutaredoxin 4 (109 aa).

One can recognise a Glutaredoxin domain in the interval 4-106 (LDKIKKQISE…TLLADVAAKY (103 aa)). Lys-21 is a glutathione binding site. Residue Cys-29 coordinates [2Fe-2S] cluster. Residues Arg-58, Phe-70, and 83 to 84 (CD) each bind glutathione.

The protein belongs to the glutaredoxin family. Monothiol subfamily. In terms of assembly, homodimer.

It localises to the cytoplasm. Monothiol glutaredoxin involved in the biogenesis of iron-sulfur clusters. This Pasteurella multocida (strain Pm70) protein is Glutaredoxin 4 (grxD).